The chain runs to 291 residues: Ribosomal RNA small subunit methyltransferase A (291 aa).

Residues Asn33, Val35, Gly60, Glu81, Asp111, and Asn129 each coordinate S-adenosyl-L-methionine.

The protein belongs to the class I-like SAM-binding methyltransferase superfamily. rRNA adenine N(6)-methyltransferase family. RsmA subfamily.

It localises to the cytoplasm. The catalysed reaction is adenosine(1518)/adenosine(1519) in 16S rRNA + 4 S-adenosyl-L-methionine = N(6)-dimethyladenosine(1518)/N(6)-dimethyladenosine(1519) in 16S rRNA + 4 S-adenosyl-L-homocysteine + 4 H(+). Functionally, specifically dimethylates two adjacent adenosines (A1518 and A1519) in the loop of a conserved hairpin near the 3'-end of 16S rRNA in the 30S particle. May play a critical role in biogenesis of 30S subunits. The sequence is that of Ribosomal RNA small subunit methyltransferase A from Streptomyces griseus subsp. griseus (strain JCM 4626 / CBS 651.72 / NBRC 13350 / KCC S-0626 / ISP 5235).